A 250-amino-acid chain; its full sequence is PF03932 family protein CutC (250 aa).

It belongs to the CutC family.

Its subcellular location is the cytoplasm. This is PF03932 family protein CutC from Proteus mirabilis (strain HI4320).